The sequence spans 62 residues: MGPMKVLLVLLVVMVAAPHIADAWQQPSCSSICDYSCGKSACISYSGRCGCCASCRRGPIYG.

The signal sequence occupies residues 1–23 (MGPMKVLLVLLVVMVAAPHIADA). 4 cysteine pairs are disulfide-bonded: Cys-29–Cys-55, Cys-33–Cys-51, Cys-37–Cys-49, and Cys-42–Cys-52. Tyr-61 carries the post-translational modification Tyrosine amide; partial.

It belongs to the paralithocin family. In terms of processing, the amidated form is probably the active form.

In terms of biological role, has weak antibacterial activity, mainly against marine Gram-positive bacteria like C.maltaromaticum (MIC=200 uM), C.mobile (MIC=100 uM), C.divergens (MIC=200 uM) and C.funditum (MIC=200 uM) but also against C.glutamicum (MIC=50 uM). Has very little or no activity against Gram-negative bacteria. The chain is Paralithocin 1 from Paralithodes camtschaticus (Red king crab).